The sequence spans 227 residues: MKNILKVFNTTILALIIIIATFSNSANAADSGTLNYEVYKYNTNDTSIANDYFNKPAKYIKKNGKLYVQITVNHSHWITGMSIEGHKENIISKNTAKDERTSEFEVSKLNGKIDGKIDVYIDEKVNGKPFKYDHHYNITYKFNGPTDVAGANAPGKDDKNSASGSDKGSDGTTTGQSESNSSNKDKVENPQTNAGTPAYIYAIPVASLALLIAITLFVRKKSKGNVE.

Residues 1 to 28 form the signal peptide; sequence MKNILKVFNTTILALIIIIATFSNSANA. An NEAT domain is found at 29–150; sequence ADSGTLNYEV…KFNGPTDVAG (122 aa). Positions 47, 48, 132, and 136 each coordinate heme. The tract at residues 149–191 is disordered; that stretch reads AGANAPGKDDKNSASGSDKGSDGTTTGQSESNSSNKDKVENPQ. Over residues 161–175 the composition is skewed to low complexity; the sequence is SASGSDKGSDGTTTG. The NPQTN sorting signal signature appears at 189–193; sequence NPQTN. The residue at position 192 (Thr192) is a Pentaglycyl murein peptidoglycan amidated threonine. Residues 193–227 constitute a propeptide, removed by sortase B; that stretch reads NAGTPAYIYAIPVASLALLIAITLFVRKKSKGNVE.

The protein belongs to the IsdC family. Monomer. Interacts with IsdA.

It localises to the secreted. The protein resides in the cell wall. Involved in heme (porphyrin) scavenging. Binds hemoglobin and almost exclusively free-base protoporphyrin IX. Probably has a role as the central conduit of the isd heme uptake system, i.e. mediates the transfer of the iron-containing nutrient from IsdABH to the membrane translocation system IsdDEF. Hemin-free IsdC (apo-IsdC) acquires hemin from hemin-containing IsdA (holo-IsdA) probably through the activated holo-IsdA-apo-IsdC complex and due to the higher affinity of apo-IsdC for the cofactor. The reaction is reversible. The chain is Iron-regulated surface determinant protein C (isdC) from Staphylococcus aureus (strain Mu3 / ATCC 700698).